We begin with the raw amino-acid sequence, 1119 residues long: Protein translocase subunit SecA (1119 aa).

Residues Gln175, 213 to 217 (GEGKT), and Asp714 contribute to the ATP site. The Zn(2+) site is built by Cys1106, Cys1108, Cys1117, and Cys1118.

Belongs to the SecA family. As to quaternary structure, monomer and homodimer. Part of the essential Sec protein translocation apparatus which comprises SecA, SecYEG and auxiliary proteins SecDF. Other proteins may also be involved. It depends on Zn(2+) as a cofactor.

It is found in the cell inner membrane. The protein resides in the cytoplasm. The catalysed reaction is ATP + H2O + cellular proteinSide 1 = ADP + phosphate + cellular proteinSide 2.. Its function is as follows. Part of the Sec protein translocase complex. Interacts with the SecYEG preprotein conducting channel. Has a central role in coupling the hydrolysis of ATP to the transfer of proteins into and across the cell membrane, serving as an ATP-driven molecular motor driving the stepwise translocation of polypeptide chains across the membrane. This Azobacteroides pseudotrichonymphae genomovar. CFP2 protein is Protein translocase subunit SecA.